A 53-amino-acid polypeptide reads, in one-letter code: Sec-independent protein translocase protein TatA (53 aa).

A helical transmembrane segment spans residues 1–21 (MGMSFSHLLIVLLIIFVLFGA).

It belongs to the TatA/E family. The Tat system comprises two distinct complexes: a TatABC complex, containing multiple copies of TatA, TatB and TatC subunits, and a separate TatA complex, containing only TatA subunits. Substrates initially bind to the TatABC complex, which probably triggers association of the separate TatA complex to form the active translocon.

The protein resides in the cell inner membrane. In terms of biological role, part of the twin-arginine translocation (Tat) system that transports large folded proteins containing a characteristic twin-arginine motif in their signal peptide across membranes. TatA could form the protein-conducting channel of the Tat system. The polypeptide is Sec-independent protein translocase protein TatA (Rickettsia akari (strain Hartford)).